The primary structure comprises 260 residues: Winged helix repair factor 1 (260 aa).

Winged helix domain regions lie at residues 38–110, 126–185, and 186–260; these read FTED…MVVM, SRAT…LAVP, and GAGR…ISET.

The protein belongs to the STK19 family. In terms of assembly, monomer in solution. Homodimer; when bound to DNA. Component of a transcription-coupled nucleotide excision repair (TC-NER) complex which assembles and interacts with the multiprotein RNA polymerase II complex when it stalls at DNA lesions.

It is found in the nucleus. Its function is as follows. DNA-binding protein which is required for efficient transcription-coupled nucleotide excision repair (TC-NER). Acts as part of a TC-NER complex which assembles and interacts with RNA polymerase II (RNAPII) when it stalls at DNA lesions. In Xenopus laevis (African clawed frog), this protein is Winged helix repair factor 1.